The primary structure comprises 680 residues: Zinc finger protein 334 (680 aa).

In terms of domain architecture, KRAB spans Val-10–Asp-81. 14 C2H2-type zinc fingers span residues Asn-237 to His-259, Tyr-265 to His-287, Tyr-293 to His-315, Tyr-321 to His-343, Tyr-349 to His-371, Asn-377 to His-399, Tyr-405 to His-427, Tyr-433 to His-455, Tyr-461 to His-483, Tyr-544 to His-566, Tyr-572 to His-594, Tyr-600 to His-622, Tyr-628 to His-650, and Tyr-656 to His-678.

Belongs to the krueppel C2H2-type zinc-finger protein family.

The protein localises to the nucleus. Its function is as follows. May be involved in transcriptional regulation. The protein is Zinc finger protein 334 (ZNF334) of Homo sapiens (Human).